We begin with the raw amino-acid sequence, 210 residues long: Glutathione S-transferase P 2 (210 aa).

In terms of domain architecture, GST N-terminal spans 2-81 (PPYTIVYFPS…HLGRSLGLYG (80 aa)). Glutathione is bound by residues Tyr-8, Arg-14, Trp-39, Lys-45, 52 to 53 (QL), and 65 to 66 (QS). In terms of domain architecture, GST C-terminal spans 83–204 (NQREAAQVDM…SSPEHVNRPI (122 aa)).

This sequence belongs to the GST superfamily. Pi family. As to quaternary structure, homodimer. In terms of tissue distribution, selectively expressed in gall bladder, colon, heart, and skeletal muscle.

The catalysed reaction is RX + glutathione = an S-substituted glutathione + a halide anion + H(+). Its function is as follows. Conjugation of reduced glutathione to a wide number of exogenous and endogenous hydrophobic electrophiles. Cannot metabolize 1-chloro-2,4-dinitrobenzene. This is Glutathione S-transferase P 2 (Gstp2) from Mus musculus (Mouse).